The chain runs to 876 residues: Inter-alpha-trypsin inhibitor heavy chain H3 (876 aa).

The signal sequence occupies residues 1-18; it reads MVALSHLGSALQLGSLWG. Positions 19–31 are excised as a propeptide; the sequence is FPRSPFRLLGKRS. The VIT domain occupies 26-155; it reads LLGKRSLPEG…KVTFELTYEE (130 aa). Asn88 carries N-linked (GlcNAc...) asparagine glycosylation. The region spanning 281 to 464 is the VWFA domain; the sequence is NVAFVIDISG…LQLQGFYEEV (184 aa). Asn577 carries N-linked (GlcNAc...) asparagine glycosylation. At Asp637 the chain carries Aspartate 1-(chondroitin 4-sulfate)-ester. The propeptide occupies 638 to 876; the sequence is PHFIIQVPEK…HTDYIVPNLF (239 aa).

It belongs to the ITIH family. I-alpha-I plasma protease inhibitors are assembled from one or two heavy chains (HC) and one light chain, bikunin. Pre-alpha-inhibitor (P-alpha-I) is composed of ITIH3/HC3 and bikunin. In terms of processing, heavy chains are linked to bikunin via chondroitin 4-sulfate esterified to the alpha-carboxyl of the C-terminal aspartate after propeptide cleavage.

It localises to the secreted. Its function is as follows. May act as a carrier of hyaluronan in serum or as a binding protein between hyaluronan and other matrix protein, including those on cell surfaces in tissues to regulate the localization, synthesis and degradation of hyaluronan which are essential to cells undergoing biological processes. This is Inter-alpha-trypsin inhibitor heavy chain H3 (ITIH3) from Pongo abelii (Sumatran orangutan).